Here is a 409-residue protein sequence, read N- to C-terminus: N-acetylglucosamine-6-phosphate deacetylase (409 aa).

Glu143 contacts a divalent metal cation. 154–155 (AH) lines the substrate pocket. His211 and His232 together coordinate a divalent metal cation. Substrate-binding positions include 235–236 (NA), Arg243, and 269–272 (DGIH). The Proton donor/acceptor role is filled by Asp294. A substrate-binding site is contributed by 328 to 330 (LGG).

It belongs to the metallo-dependent hydrolases superfamily. NagA family. Requires a divalent metal cation as cofactor.

The enzyme catalyses N-acetyl-D-glucosamine 6-phosphate + H2O = D-glucosamine 6-phosphate + acetate. The protein operates within amino-sugar metabolism; N-acetylneuraminate degradation. In terms of biological role, hydrolyzes the N-glycolyl group from N-glycolylglucosamine 6-phosphate (GlcNGc-6-P) in the N-glycolylneuraminic acid (Neu5Gc) degradation pathway. The protein is N-acetylglucosamine-6-phosphate deacetylase (Amdhd2) of Mus musculus (Mouse).